The primary structure comprises 144 residues: Protein cornichon homolog 1 (144 aa).

At 1-10 the chain is on the cytoplasmic side; it reads MAFTFAAFCY. Residues 11–31 traverse the membrane as a helical segment; that stretch reads MLALLLTATLIFFAIWHIIAF. Over 32 to 56 the chain is Lumenal; that stretch reads DELKTDYKNPIDQCNTLNPLVLPEY. The helical transmembrane segment at 57–77 threads the bilayer; the sequence is LIHAFFCVMFLCAAEWLTLGL. Topologically, residues 78 to 122 are cytoplasmic; it reads NMPLLAYHIWRYMSRPVMSGPGLYDPTTIMNADILAYCQKEGWCK. A helical membrane pass occupies residues 123–143; the sequence is LAFYLLAFFYYLYGMIYVLVS. A topological domain (lumenal) is located at residue Ser-144.

The protein belongs to the cornichon family. Interacts with AREG immature precursor and with immature TGFA, i.e. with a prosegment and lacking full N-glycosylation, but not with the fully N-glycosylated form. In the Golgi apparatus, may form a complex with GORASP55 and transmembrane TGFA.

The protein localises to the endoplasmic reticulum membrane. The protein resides in the golgi apparatus membrane. Functionally, involved in the selective transport and maturation of TGF-alpha family proteins. In Pongo abelii (Sumatran orangutan), this protein is Protein cornichon homolog 1 (CNIH1).